Consider the following 208-residue polypeptide: N-(5'-phosphoribosyl)anthranilate isomerase (208 aa).

This sequence belongs to the TrpF family.

It carries out the reaction N-(5-phospho-beta-D-ribosyl)anthranilate = 1-(2-carboxyphenylamino)-1-deoxy-D-ribulose 5-phosphate. It participates in amino-acid biosynthesis; L-tryptophan biosynthesis; L-tryptophan from chorismate: step 3/5. The chain is N-(5'-phosphoribosyl)anthranilate isomerase from Methanococcus vannielii (strain ATCC 35089 / DSM 1224 / JCM 13029 / OCM 148 / SB).